The primary structure comprises 271 residues: Formamidopyrimidine-DNA glycosylase (271 aa).

Catalysis depends on proline 2, which acts as the Schiff-base intermediate with DNA. Glutamate 3 acts as the Proton donor in catalysis. Residue lysine 58 is the Proton donor; for beta-elimination activity of the active site. DNA-binding residues include histidine 91, arginine 110, and arginine 152. Residues tryptophan 237–lysine 271 form an FPG-type zinc finger. Arginine 261 functions as the Proton donor; for delta-elimination activity in the catalytic mechanism.

This sequence belongs to the FPG family. Monomer. The cofactor is Zn(2+).

The catalysed reaction is Hydrolysis of DNA containing ring-opened 7-methylguanine residues, releasing 2,6-diamino-4-hydroxy-5-(N-methyl)formamidopyrimidine.. It carries out the reaction 2'-deoxyribonucleotide-(2'-deoxyribose 5'-phosphate)-2'-deoxyribonucleotide-DNA = a 3'-end 2'-deoxyribonucleotide-(2,3-dehydro-2,3-deoxyribose 5'-phosphate)-DNA + a 5'-end 5'-phospho-2'-deoxyribonucleoside-DNA + H(+). In terms of biological role, involved in base excision repair of DNA damaged by oxidation or by mutagenic agents. Acts as a DNA glycosylase that recognizes and removes damaged bases. Has a preference for oxidized purines, such as 7,8-dihydro-8-oxoguanine (8-oxoG). Has AP (apurinic/apyrimidinic) lyase activity and introduces nicks in the DNA strand. Cleaves the DNA backbone by beta-delta elimination to generate a single-strand break at the site of the removed base with both 3'- and 5'-phosphates. The chain is Formamidopyrimidine-DNA glycosylase from Nitrosomonas eutropha (strain DSM 101675 / C91 / Nm57).